We begin with the raw amino-acid sequence, 695 residues long: Nucleoprotein (695 aa).

Coiled-coil stretches lie at residues 316–341 (VNVG…RRHE) and 372–399 (QTLA…VEDQ). Disordered stretches follow at residues 423-458 (VQAR…SFVD), 483-515 (TSRE…TNPI), and 527-612 (PVQE…DTRA). Composition is skewed to polar residues over residues 495–505 (RQSQDLNNSQG) and 537–552 (TTDS…SDNE). The PTAP/PSAP motif motif lies at 603-606 (PSAP).

It belongs to the filoviruses nucleoprotein family. As to quaternary structure, homooligomer. Homomultimerizes to form the nucleocapsid. Binds to viral genomic RNA. Interacts with VP35 and VP30 to form the nucleocapsid. Also interacts with VP24 and VP40. In terms of processing, phosphorylated.

It is found in the virion. The protein localises to the host cytoplasm. In terms of biological role, encapsidates the genome, protecting it from nucleases. The encapsidated genomic RNA is termed the nucleocapsid and serves as template for transcription and replication. During replication, encapsidation by NP is coupled to RNA synthesis and all replicative products are resistant to nucleases. The chain is Nucleoprotein (NP) from Chlorocebus aethiops (Green monkey).